Consider the following 55-residue polypeptide: Small ribosomal subunit protein eS31 (55 aa).

Residues cysteine 26, cysteine 29, cysteine 44, and cysteine 47 each coordinate Zn(2+).

It belongs to the eukaryotic ribosomal protein eS31 family. Part of the 30S ribosomal subunit. The cofactor is Zn(2+).

The polypeptide is Small ribosomal subunit protein eS31 (Archaeoglobus fulgidus (strain ATCC 49558 / DSM 4304 / JCM 9628 / NBRC 100126 / VC-16)).